Consider the following 309-residue polypeptide: Syndecan-1 (309 aa).

The N-terminal stretch at 1–22 (MRRAALWLWLCALALRLQPVLP) is a signal peptide. Residues 23-253 (QIVTVNVPPE…GLLDRKEVLG (231 aa)) lie on the Extracellular side of the membrane. Disordered regions lie at residues 28–57 (NVPP…DITL) and 145–185 (TTAQ…GGTS). Residues 32 to 42 (EDQDGSGDDSD) show a composition bias toward acidic residues. An O-linked (Xyl...) (chondroitin sulfate) serine glycan is attached at S37. N43 carries an N-linked (GlcNAc...) asparagine glycan. 2 O-linked (Xyl...) (heparan sulfate) serine glycosylation sites follow: S45 and S47. The segment covering 173–183 (GQPDQQPPSGG) has biased composition (low complexity). Residues S205 and S215 are each glycosylated (O-linked (Xyl...) (chondroitin sulfate) serine). Residues 254–274 (GVIAGGLVGLIFAVCLVGFML) form a helical membrane-spanning segment. The Cytoplasmic segment spans residues 275–309 (YRMKKKDEGSYSLEEPKQANGGAYQKPTKQEEFYA). The tract at residues 283–309 (GSYSLEEPKQANGGAYQKPTKQEEFYA) is disordered. Residue S284 is modified to Phosphoserine.

The protein belongs to the syndecan proteoglycan family. Interacts with CDCP1. Interacts (via C-terminus) with TIAM1 (via PDZ domain). Interacts with MDK. Post-translationally, shedding is enhanced by a number of factors such as heparanase, thrombin or EGF. Also by stress and wound healing. PMA-mediated shedding is inhibited by TIMP3.

The protein resides in the membrane. It localises to the secreted. It is found in the extracellular exosome. In terms of biological role, cell surface proteoglycan that contains both heparan sulfate and chondroitin sulfate and that links the cytoskeleton to the interstitial matrix. Regulates exosome biogenesis in concert with SDCBP and PDCD6IP. Able to induce its own expression in dental mesenchymal cells and also in the neighboring dental epithelial cells via an MSX1-mediated pathway. This is Syndecan-1 from Mesocricetus auratus (Golden hamster).